Consider the following 1666-residue polypeptide: Probable clathrin heavy chain (1666 aa).

WD40-like repeat regions lie at residues 24-67 (SFGF…RPIS), 68-107 (ADSV…MNQD), 108-148 (VVYW…SSLN), 149-194 (GTQI…QPLE), 195-255 (SHAS…PEAV), 256-299 (NDFP…VSGE), and 300-328 (SIFV…VSIN). T392 carries the post-translational modification Phosphothreonine. S393 bears the Phosphoserine mark. CHCR repeat units follow at residues 534-680 (MFNS…QIVV), 683-825 (ATRY…DEEL), 830-969 (LMSV…LLDQ), 975-1120 (VPES…IPDA), 1124-1265 (YLKA…FRLA), 1270-1415 (LNLI…MLLT), and 1418-1561 (LAAL…YECF).

This sequence belongs to the clathrin heavy chain family. In terms of assembly, clathrin triskelions, composed of 3 heavy chains and 3 light chains, are the basic subunits of the clathrin coat.

It is found in the cytoplasmic vesicle membrane. The protein localises to the membrane. The protein resides in the coated pit. Its function is as follows. Clathrin is the major protein of the polyhedral coat of coated pits and vesicles. The sequence is that of Probable clathrin heavy chain (chc1) from Schizosaccharomyces pombe (strain 972 / ATCC 24843) (Fission yeast).